The chain runs to 72 residues: Large ribosomal subunit protein bL31 (72 aa).

Zn(2+) is bound by residues cysteine 16, cysteine 18, cysteine 38, and cysteine 41.

The protein belongs to the bacterial ribosomal protein bL31 family. Type A subfamily. As to quaternary structure, part of the 50S ribosomal subunit. Zn(2+) serves as cofactor.

In terms of biological role, binds the 23S rRNA. This is Large ribosomal subunit protein bL31 from Vibrio campbellii (strain ATCC BAA-1116).